The sequence spans 183 residues: Phosphinothricin N-acetyltransferase (183 aa).

The region spanning 8–169 (VEIRPATAAD…DVGFWQRDFE (162 aa)) is the N-acetyltransferase domain. Acetyl-CoA contacts are provided by residues 91-93 (VYV), 99-104 (RLGLGS), and asparagine 130.

This sequence belongs to the acetyltransferase family. PAT/BAR subfamily.

The enzyme catalyses phosphinothricin + acetyl-CoA = N-acetylphosphinothricin + CoA + H(+). Functionally, inactivates phosphinothricin (PPT) by transfer of an acetyl group from acetyl CoA. This enzyme is an effector of phosphinothricin tripeptide (PTT or bialaphos) resistance. In Streptomyces viridochromogenes (strain DSM 40736 / JCM 4977 / BCRC 1201 / Tue 494), this protein is Phosphinothricin N-acetyltransferase.